The primary structure comprises 243 residues: Aliphatic sulfonates import ATP-binding protein SsuB (243 aa).

An ABC transporter domain is found at 11–230 (ATVRGLRKSY…RTHPSFASYT (220 aa)). 43–50 (GRSGSGKS) lines the ATP pocket.

It belongs to the ABC transporter superfamily. Aliphatic sulfonates importer (TC 3.A.1.17.2) family. The complex is composed of two ATP-binding proteins (SsuB), two transmembrane proteins (SsuC) and a solute-binding protein (SsuA).

It localises to the cell membrane. It catalyses the reaction ATP + H2O + aliphatic sulfonate-[sulfonate-binding protein]Side 1 = ADP + phosphate + aliphatic sulfonateSide 2 + [sulfonate-binding protein]Side 1.. Part of the ABC transporter complex SsuABC involved in aliphatic sulfonates import. Responsible for energy coupling to the transport system. Is also involved in taurine transport. Seems to not be involved in long chain aliphatic sulfonates transport (chain length of eight carbon atoms or more). In Corynebacterium glutamicum (strain ATCC 13032 / DSM 20300 / JCM 1318 / BCRC 11384 / CCUG 27702 / LMG 3730 / NBRC 12168 / NCIMB 10025 / NRRL B-2784 / 534), this protein is Aliphatic sulfonates import ATP-binding protein SsuB.